The following is a 228-amino-acid chain: Cytochrome c oxidase subunit 2 (228 aa).

Residues 1–26 (MRTWSNFNLQNSASPLMEQIIFFHDH) are Mitochondrial intermembrane-facing. A helical membrane pass occupies residues 27–48 (TLIILIMITILVGYIMINLFFN). The Mitochondrial matrix segment spans residues 49–62 (KFINRFFLVGQMIE). A helical transmembrane segment spans residues 63 to 82 (LIWTVLPAITLIFIALPSLR). The Mitochondrial intermembrane portion of the chain corresponds to 83 to 228 (LLYLLDELNN…FINWINNYSY (146 aa)). Cu cation is bound by residues His-161, Cys-196, Glu-198, Cys-200, His-204, and Met-207. Glu-198 contacts Mg(2+).

The protein belongs to the cytochrome c oxidase subunit 2 family. In terms of assembly, component of the cytochrome c oxidase (complex IV, CIV), a multisubunit enzyme composed of a catalytic core of 3 subunits and several supernumerary subunits. The complex exists as a monomer or a dimer and forms supercomplexes (SCs) in the inner mitochondrial membrane with ubiquinol-cytochrome c oxidoreductase (cytochrome b-c1 complex, complex III, CIII). Requires Cu cation as cofactor.

It localises to the mitochondrion inner membrane. The enzyme catalyses 4 Fe(II)-[cytochrome c] + O2 + 8 H(+)(in) = 4 Fe(III)-[cytochrome c] + 2 H2O + 4 H(+)(out). Functionally, component of the cytochrome c oxidase, the last enzyme in the mitochondrial electron transport chain which drives oxidative phosphorylation. The respiratory chain contains 3 multisubunit complexes succinate dehydrogenase (complex II, CII), ubiquinol-cytochrome c oxidoreductase (cytochrome b-c1 complex, complex III, CIII) and cytochrome c oxidase (complex IV, CIV), that cooperate to transfer electrons derived from NADH and succinate to molecular oxygen, creating an electrochemical gradient over the inner membrane that drives transmembrane transport and the ATP synthase. Cytochrome c oxidase is the component of the respiratory chain that catalyzes the reduction of oxygen to water. Electrons originating from reduced cytochrome c in the intermembrane space (IMS) are transferred via the dinuclear copper A center (CU(A)) of subunit 2 and heme A of subunit 1 to the active site in subunit 1, a binuclear center (BNC) formed by heme A3 and copper B (CU(B)). The BNC reduces molecular oxygen to 2 water molecules using 4 electrons from cytochrome c in the IMS and 4 protons from the mitochondrial matrix. This chain is Cytochrome c oxidase subunit 2 (COII), found in Galleria mellonella (Greater wax moth).